A 1140-amino-acid polypeptide reads, in one-letter code: Probable DNA-directed RNA polymerase II subunit RPB2 homolog (1140 aa).

D773 is a Mg(2+) binding site. Zn(2+) is bound by residues C1092, C1095, C1105, and C1108. The C4-type zinc-finger motif lies at 1092–1108 (CKDCGMMSSTSKKCHHC).

It belongs to the RNA polymerase beta chain family.

It carries out the reaction RNA(n) + a ribonucleoside 5'-triphosphate = RNA(n+1) + diphosphate. Functionally, component of the DNA-dependent RNA polymerase that catalyzes the transcription of DNA into RNA using the four ribonucleoside triphosphates as substrates. Second largest component of RNA polymerase II which synthesizes mRNA precursors and many functional non-coding RNAs. Proposed to contribute to the polymerase catalytic activity and forms the polymerase active center together with the largest subunit. The chain is Probable DNA-directed RNA polymerase II subunit RPB2 homolog from Invertebrate iridescent virus 3 (IIV-3).